The chain runs to 1123 residues: Ubiquitin carboxyl-terminal hydrolase 43 (1123 aa).

Positions 1–102 (MDLGPGDAAG…DGARPPGAQG (102 aa)) are disordered. The segment covering 17-28 (RPRRRRSLRRLF) has biased composition (basic residues). The segment covering 29–39 (SRFLLALGSRS) has biased composition (low complexity). The 610-residue stretch at 101 to 710 (QGLKNHGNTC…GAYILFYQKR (610 aa)) folds into the USP domain. Cysteine 110 functions as the Nucleophile in the catalytic mechanism. A disordered region spans residues 202–221 (EGSSRGPVSEKLPPEATKTS). Histidine 668 acts as the Proton acceptor in catalysis. An Asymmetric dimethylarginine modification is found at arginine 746. Disordered regions lie at residues 795–826 (ISMK…EKPP), 854–886 (TGTA…IERG), 959–1049 (FQMG…RIPE), and 1068–1099 (SSLR…QASY). Serine 969 is subject to Phosphoserine. Over residues 979–990 (KDSRRGTSELDR) the composition is skewed to basic and acidic residues. The span at 1016–1027 (VSPQVPPVSLVS) shows a compositional bias: low complexity. Serine 1041 carries the post-translational modification Phosphoserine.

This sequence belongs to the peptidase C19 family. In terms of tissue distribution, expressed in brain, aorta and lung at low levels.

It carries out the reaction Thiol-dependent hydrolysis of ester, thioester, amide, peptide and isopeptide bonds formed by the C-terminal Gly of ubiquitin (a 76-residue protein attached to proteins as an intracellular targeting signal).. In terms of biological role, may recognize and hydrolyze the peptide bond at the C-terminal Gly of ubiquitin. Involved in the processing of poly-ubiquitin precursors as well as that of ubiquitinated proteins. This is Ubiquitin carboxyl-terminal hydrolase 43 (USP43) from Homo sapiens (Human).